The primary structure comprises 165 residues: UPF0114 protein in repA1-repA2 intergenic region (165 aa).

Transmembrane regions (helical) follow at residues 10 to 32, 53 to 75, and 134 to 156; these read YASR…LLTL, LVLV…MVMF, and DQIM…MACI.

Belongs to the UPF0114 family.

Its subcellular location is the cell membrane. This chain is UPF0114 protein in repA1-repA2 intergenic region, found in Buchnera aphidicola subsp. Baizongia pistaciae (strain Bp).